The chain runs to 77 residues: uncharacterized protein (77 aa).

This is an uncharacterized protein from Acidianus ambivalens (Desulfurolobus ambivalens).